A 118-amino-acid polypeptide reads, in one-letter code: Hydrogenase maturation factor HypA (118 aa).

H2 is a binding site for Ni(2+). Zn(2+)-binding residues include C73, C76, C89, and C92.

The protein belongs to the HypA/HybF family.

Functionally, involved in the maturation of [NiFe] hydrogenases. Required for nickel insertion into the metal center of the hydrogenase. The sequence is that of Hydrogenase maturation factor HypA from Shewanella oneidensis (strain ATCC 700550 / JCM 31522 / CIP 106686 / LMG 19005 / NCIMB 14063 / MR-1).